Consider the following 332-residue polypeptide: Fructose-1,6-bisphosphatase class 1 (332 aa).

Mg(2+) is bound by residues Glu-94, Asp-116, Leu-118, and Asp-119. Residues 119–122 (DGSS), Asn-211, Tyr-239, 257–259 (YLY), and Lys-269 contribute to the substrate site. Glu-275 is a binding site for Mg(2+).

This sequence belongs to the FBPase class 1 family. As to quaternary structure, homotetramer. Mg(2+) serves as cofactor.

The protein resides in the cytoplasm. It catalyses the reaction beta-D-fructose 1,6-bisphosphate + H2O = beta-D-fructose 6-phosphate + phosphate. It participates in carbohydrate biosynthesis; Calvin cycle. In Synechococcus sp. (strain JA-3-3Ab) (Cyanobacteria bacterium Yellowstone A-Prime), this protein is Fructose-1,6-bisphosphatase class 1.